A 265-amino-acid chain; its full sequence is Short-chain dehydrogenase/reductase fsr5 (265 aa).

An N-terminal signal peptide occupies residues 1 to 32; it reads MASLGKYVSKLAGSRVLVIGGSSGIGFGVAEA. NADP(+)-binding residues include Ser22, Ser23, Ile25, Ser45, and Lys50. N-linked (GlcNAc...) asparagine glycosylation is present at Asn62. NADP(+) is bound by residues Asn88, Arg130, and Thr204. N-linked (GlcNAc...) asparagine glycans are attached at residues Asn218 and Asn250.

It belongs to the short-chain dehydrogenases/reductases (SDR) family.

Functionally, short-chain dehydrogenase/reductase; part of the gene cluster that mediates the biosynthesis of fusarubins, highly pigmented naphthoquinones responsible for the coloration of the fruiting bodies. The non-reducing polyketide synthase FSR1 is responsible for the condensation of seven acetyl-CoA units to yield a haptaketide. After rings A and B are formed by aldol-type cyclization, the PKS-derived product is released as 6-O-demethylfusarubinaldehyde. Then, two hydroxyl groups at C-5 and C-10 are incorporated by FSR3, and simultaneously hydroxyl groups at C-6 and C-8 are methylated by FSR2. The aldehyde is, on the one hand, reduced by FSR3 to 8-O-methylfusarubin alcohol, which equilibrates mainly with 8-O-methylfusarubin and only small amounts of 8-O-methylnectriafurone. On the other hand, the aldehyde can be oxidized to form 8-O-methylfusarubinic acid, a reaction driven by FSR3 equilibrating with 8-O-methylfusarubinlactone, finally resulting in 8-O-methylanhydrofusarubinlactol after a further reduction step and loss of water. 8-O-Methylfusarubinic acid can also undergo decarboxylation, resulting in 8-O-methyl-13-hydroxynorjavanicin after another hydroxylation step at C-13. Both steps are most likely also accomplished by FSR3. No enzymatic function has been determined so far for either FSR4 and FSR5. Their deletion does not alter the product spectrum, but the possibility that they catalyze specific enzymatic steps during perithecium development cannot be ruled out. FSR4 might possess a regulatory function in the biosynthesis of fusarubins. This Gibberella fujikuroi (strain CBS 195.34 / IMI 58289 / NRRL A-6831) (Bakanae and foot rot disease fungus) protein is Short-chain dehydrogenase/reductase fsr5.